The chain runs to 76 residues: Conotoxin Am6.3 (76 aa).

A signal peptide spans 1–22; that stretch reads MKLTCMMIIAVLFLTAWTFATA. Cystine bridges form between Cys52/Cys67, Cys59/Cys71, and Cys66/Cys75.

The protein belongs to the conotoxin O1 superfamily. Is not hydroxylated. Expressed by the venom duct.

The protein resides in the secreted. Functionally, probable toxin that inhibits ion channels. In Conus amadis (Amadis cone), this protein is Conotoxin Am6.3.